A 123-amino-acid polypeptide reads, in one-letter code: Large ribosomal subunit protein uL14 (123 aa).

Belongs to the universal ribosomal protein uL14 family. In terms of assembly, part of the 50S ribosomal subunit. Forms a cluster with proteins L3 and L19. In the 70S ribosome, L14 and L19 interact and together make contacts with the 16S rRNA in bridges B5 and B8.

Its function is as follows. Binds to 23S rRNA. Forms part of two intersubunit bridges in the 70S ribosome. The sequence is that of Large ribosomal subunit protein uL14 from Vibrio cholerae serotype O1 (strain ATCC 39541 / Classical Ogawa 395 / O395).